A 197-amino-acid chain; its full sequence is 7-methyl-GTP pyrophosphatase (197 aa).

D72 functions as the Proton acceptor in the catalytic mechanism.

The protein belongs to the Maf family. YceF subfamily. Requires a divalent metal cation as cofactor.

It is found in the cytoplasm. It carries out the reaction N(7)-methyl-GTP + H2O = N(7)-methyl-GMP + diphosphate + H(+). In terms of biological role, nucleoside triphosphate pyrophosphatase that hydrolyzes 7-methyl-GTP (m(7)GTP). May have a dual role in cell division arrest and in preventing the incorporation of modified nucleotides into cellular nucleic acids. The protein is 7-methyl-GTP pyrophosphatase of Bordetella avium (strain 197N).